We begin with the raw amino-acid sequence, 164 residues long: Crossover junction endodeoxyribonuclease RuvC (164 aa).

Catalysis depends on residues D7, E67, and D140. Positions 7, 67, and 140 each coordinate Mg(2+).

It belongs to the RuvC family. In terms of assembly, homodimer which binds Holliday junction (HJ) DNA. The HJ becomes 2-fold symmetrical on binding to RuvC with unstacked arms; it has a different conformation from HJ DNA in complex with RuvA. In the full resolvosome a probable DNA-RuvA(4)-RuvB(12)-RuvC(2) complex forms which resolves the HJ. The cofactor is Mg(2+).

The protein resides in the cytoplasm. The enzyme catalyses Endonucleolytic cleavage at a junction such as a reciprocal single-stranded crossover between two homologous DNA duplexes (Holliday junction).. Its function is as follows. The RuvA-RuvB-RuvC complex processes Holliday junction (HJ) DNA during genetic recombination and DNA repair. Endonuclease that resolves HJ intermediates. Cleaves cruciform DNA by making single-stranded nicks across the HJ at symmetrical positions within the homologous arms, yielding a 5'-phosphate and a 3'-hydroxyl group; requires a central core of homology in the junction. The consensus cleavage sequence is 5'-(A/T)TT(C/G)-3'. Cleavage occurs on the 3'-side of the TT dinucleotide at the point of strand exchange. HJ branch migration catalyzed by RuvA-RuvB allows RuvC to scan DNA until it finds its consensus sequence, where it cleaves and resolves the cruciform DNA. This chain is Crossover junction endodeoxyribonuclease RuvC, found in Pelotomaculum thermopropionicum (strain DSM 13744 / JCM 10971 / SI).